Consider the following 239-residue polypeptide: Putative HTH-type transcriptional regulator YkgA (239 aa).

The HTH araC/xylS-type domain maps to 19–117 (QQLLEWIECN…GCSPREYRHR (99 aa)). 2 consecutive DNA-binding regions (H-T-H motif) follow at residues 36 to 57 (EDIA…RNFM) and 84 to 107 (MLDI…KKLF).

This Escherichia coli (strain K12) protein is Putative HTH-type transcriptional regulator YkgA (ykgA).